The primary structure comprises 177 residues: Peptidyl-tRNA hydrolase (177 aa).

Tyr18 contributes to the tRNA binding site. His23 acts as the Proton acceptor in catalysis. TRNA contacts are provided by Phe65, Asn67, and Asn113.

It belongs to the PTH family. In terms of assembly, monomer.

Its subcellular location is the cytoplasm. It carries out the reaction an N-acyl-L-alpha-aminoacyl-tRNA + H2O = an N-acyl-L-amino acid + a tRNA + H(+). Its function is as follows. Hydrolyzes ribosome-free peptidyl-tRNAs (with 1 or more amino acids incorporated), which drop off the ribosome during protein synthesis, or as a result of ribosome stalling. In terms of biological role, catalyzes the release of premature peptidyl moieties from peptidyl-tRNA molecules trapped in stalled 50S ribosomal subunits, and thus maintains levels of free tRNAs and 50S ribosomes. This Corynebacterium efficiens (strain DSM 44549 / YS-314 / AJ 12310 / JCM 11189 / NBRC 100395) protein is Peptidyl-tRNA hydrolase.